The sequence spans 1388 residues: Putative ATP-dependent RNA helicase DHX57 (1388 aa).

Over residues 1-11 (MSSSVRRKGKP) the composition is skewed to basic residues. Disordered regions lie at residues 1–107 (MSSS…MTSE) and 121–154 (EQGADAGSERGTSGEEEDSEPQCGEEQGWPAGQE). The segment covering 34-51 (HGGGGGGGGSCGGGGGGS) has biased composition (gly residues). Basic and acidic residues predominate over residues 79 to 89 (DSNKSKGETRP). A phosphoserine mark is found at Ser-128 and Ser-133. The 46-residue stretch at 175–220 (PVPECAVSPLAVQKLSRYGFHTEHCQLALRICDGDLGAALEHLLRQ) folds into the UBA domain. The C3H1-type zinc-finger motif lies at 299-326 (DTSPETCKFYLKGNCKFGSKCKFKHEVP). Phosphoserine is present on Ser-475. The Helicase ATP-binding domain maps to 555–722 (LKLLSKHQVV…FSYCPVITIP (168 aa)). 568 to 575 (GMTGCGKT) lines the ATP pocket. A DEVH box motif is present at residues 669–672 (DEVH). One can recognise a Helicase C-terminal domain in the interval 832–1012 (LIEALLEWIV…QLCLRIKILE (181 aa)).

The protein belongs to the DEAD box helicase family. DEAH subfamily.

The catalysed reaction is ATP + H2O = ADP + phosphate + H(+). Probable ATP-binding RNA helicase. The polypeptide is Putative ATP-dependent RNA helicase DHX57 (Dhx57) (Mus musculus (Mouse)).